The chain runs to 86 residues: Photosystem I reaction center subunit PsaK 1 (86 aa).

The propeptide occupies 1–8 (MLTSTLLA). 2 consecutive transmembrane segments (helical) span residues 14–34 (LEWSPTVGIIMVIANVIAITF) and 60–80 (PALLATTAFGHILGVGLVLGL).

Belongs to the PsaG/PsaK family. As to quaternary structure, the cyanobacterial PSI reaction center is composed of one copy each of PsaA,B,C,D,E,F,I,J,K,L,M and X, and forms dimeric and tetrameric complexes.

It localises to the cellular thylakoid membrane. The protein is Photosystem I reaction center subunit PsaK 1 (psaK1) of Nostoc sp. (strain PCC 7120 / SAG 25.82 / UTEX 2576).